The chain runs to 276 residues: Putative pyruvate, phosphate dikinase regulatory protein 2 (276 aa).

Position 146-153 (Gly146–Thr153) interacts with ADP.

Belongs to the pyruvate, phosphate/water dikinase regulatory protein family. PDRP subfamily.

The enzyme catalyses N(tele)-phospho-L-histidyl/L-threonyl-[pyruvate, phosphate dikinase] + ADP = N(tele)-phospho-L-histidyl/O-phospho-L-threonyl-[pyruvate, phosphate dikinase] + AMP + H(+). It catalyses the reaction N(tele)-phospho-L-histidyl/O-phospho-L-threonyl-[pyruvate, phosphate dikinase] + phosphate + H(+) = N(tele)-phospho-L-histidyl/L-threonyl-[pyruvate, phosphate dikinase] + diphosphate. Its function is as follows. Bifunctional serine/threonine kinase and phosphorylase involved in the regulation of the pyruvate, phosphate dikinase (PPDK) by catalyzing its phosphorylation/dephosphorylation. This Enterococcus faecalis (strain ATCC 700802 / V583) protein is Putative pyruvate, phosphate dikinase regulatory protein 2.